Reading from the N-terminus, the 199-residue chain is Holliday junction branch migration complex subunit RuvA (199 aa).

A domain I region spans residues 1-64 (MIALLTGKLA…EDAINLYGFR (64 aa)). Residues 65–143 (TQQEKELFQL…KLGLAQPQAG (79 aa)) are domain II. A flexible linker region spans residues 144 to 148 (GTTAP). The segment at 149–199 (AKQEIRDDVLSALINLGYKEAVVQKALAELKVTEDATVELVLKQALKILMK) is domain III.

It belongs to the RuvA family. Homotetramer. Forms an RuvA(8)-RuvB(12)-Holliday junction (HJ) complex. HJ DNA is sandwiched between 2 RuvA tetramers; dsDNA enters through RuvA and exits via RuvB. An RuvB hexamer assembles on each DNA strand where it exits the tetramer. Each RuvB hexamer is contacted by two RuvA subunits (via domain III) on 2 adjacent RuvB subunits; this complex drives branch migration. In the full resolvosome a probable DNA-RuvA(4)-RuvB(12)-RuvC(2) complex forms which resolves the HJ.

It is found in the cytoplasm. In terms of biological role, the RuvA-RuvB-RuvC complex processes Holliday junction (HJ) DNA during genetic recombination and DNA repair, while the RuvA-RuvB complex plays an important role in the rescue of blocked DNA replication forks via replication fork reversal (RFR). RuvA specifically binds to HJ cruciform DNA, conferring on it an open structure. The RuvB hexamer acts as an ATP-dependent pump, pulling dsDNA into and through the RuvAB complex. HJ branch migration allows RuvC to scan DNA until it finds its consensus sequence, where it cleaves and resolves the cruciform DNA. This Citrifermentans bemidjiense (strain ATCC BAA-1014 / DSM 16622 / JCM 12645 / Bem) (Geobacter bemidjiensis) protein is Holliday junction branch migration complex subunit RuvA.